The chain runs to 171 residues: Ribosome-binding factor A (171 aa).

Residues 120–132 (AALAAAAQPAGDP) are compositionally biased toward low complexity. A disordered region spans residues 120–171 (AALAAAAQPAGDPDPYKKPVDHTDDWDEDDEDDRDGDDAVDALDAAADVPRL). Basic and acidic residues predominate over residues 133–142 (DPYKKPVDHT). The segment covering 143-160 (DDWDEDDEDDRDGDDAVD) has biased composition (acidic residues). Positions 161 to 171 (ALDAAADVPRL) are enriched in low complexity.

It belongs to the RbfA family. Monomer. Binds 30S ribosomal subunits, but not 50S ribosomal subunits or 70S ribosomes.

It localises to the cytoplasm. Functionally, one of several proteins that assist in the late maturation steps of the functional core of the 30S ribosomal subunit. Associates with free 30S ribosomal subunits (but not with 30S subunits that are part of 70S ribosomes or polysomes). Required for efficient processing of 16S rRNA. May interact with the 5'-terminal helix region of 16S rRNA. This is Ribosome-binding factor A from Kineococcus radiotolerans (strain ATCC BAA-149 / DSM 14245 / SRS30216).